We begin with the raw amino-acid sequence, 350 residues long: Ion-translocating oxidoreductase complex subunit D (350 aa).

Transmembrane regions (helical) follow at residues 20-40 (IMML…WFFG), 42-62 (GTLF…AAVL), 68-88 (PIAA…LAVS), 89-109 (IPPL…VIIA), and 123-143 (PAMI…TSWL). Position 187 is an FMN phosphoryl threonine (T187). The next 5 membrane-spanning stretches (helical) occupy residues 215–235 (LAGA…VWLL), 244–264 (IPVS…AFAG), 267–287 (LASP…FFIL), 301–321 (LIFG…GGYP), and 322–342 (DGVA…DYYT).

Belongs to the NqrB/RnfD family. In terms of assembly, the complex is composed of six subunits: RnfA, RnfB, RnfC, RnfD, RnfE and RnfG. Requires FMN as cofactor.

The protein localises to the cell inner membrane. Its function is as follows. Part of a membrane-bound complex that couples electron transfer with translocation of ions across the membrane. In Citrobacter koseri (strain ATCC BAA-895 / CDC 4225-83 / SGSC4696), this protein is Ion-translocating oxidoreductase complex subunit D.